The chain runs to 306 residues: Aspartate carbamoyltransferase catalytic subunit (306 aa).

Residues arginine 51 and threonine 52 each contribute to the carbamoyl phosphate site. L-aspartate is bound at residue lysine 79. Carbamoyl phosphate-binding residues include arginine 101, histidine 130, and glutamine 133. Residues arginine 163 and arginine 215 each contribute to the L-aspartate site. Residues glycine 256 and proline 257 each coordinate carbamoyl phosphate.

This sequence belongs to the aspartate/ornithine carbamoyltransferase superfamily. ATCase family. As to quaternary structure, heterododecamer (2C3:3R2) of six catalytic PyrB chains organized as two trimers (C3), and six regulatory PyrI chains organized as three dimers (R2).

It catalyses the reaction carbamoyl phosphate + L-aspartate = N-carbamoyl-L-aspartate + phosphate + H(+). The protein operates within pyrimidine metabolism; UMP biosynthesis via de novo pathway; (S)-dihydroorotate from bicarbonate: step 2/3. Catalyzes the condensation of carbamoyl phosphate and aspartate to form carbamoyl aspartate and inorganic phosphate, the committed step in the de novo pyrimidine nucleotide biosynthesis pathway. This Ehrlichia ruminantium (strain Welgevonden) protein is Aspartate carbamoyltransferase catalytic subunit.